The chain runs to 337 residues: Glutaredoxin-3 (337 aa).

N-acetylalanine is present on Ala-2. The region spanning 2–119 (AAGAAEAGEA…LTKKVQRHVS (118 aa)) is the Thioredoxin domain. Residue Ser-119 is modified to Phosphoserine. Glutaredoxin domains follow at residues 144–238 (HAAP…PKLE) and 239–337 (ERLK…KGEN). Positions 161 and 263 each coordinate [2Fe-2S] cluster.

As to quaternary structure, homodimer; the homodimer is independent of 2Fe-2S clusters. Heterotrimer; forms a heterotrimeric complex composed by two BOLA2 molecules and one GLRX3 molecule; linked by [2Fe-2S] clusters. Interacts (via N-terminus) with PRKCQ/PKC-theta. Interacts (via C-terminus) with CSRP3. Interacts with CSRP2.

The protein localises to the cytoplasm. It localises to the cytosol. The protein resides in the cell cortex. Its subcellular location is the myofibril. It is found in the sarcomere. The protein localises to the z line. Together with BOLA2, acts as a cytosolic iron-sulfur (Fe-S) cluster assembly factor that facilitates [2Fe-2S] cluster insertion into a subset of cytosolic proteins. Acts as a critical negative regulator of cardiac hypertrophy and a positive inotropic regulator. Required for hemoglobin maturation. Does not possess any thyoredoxin activity since it lacks the conserved motif that is essential for catalytic activity. The chain is Glutaredoxin-3 (Glrx3) from Mus musculus (Mouse).